A 347-amino-acid polypeptide reads, in one-letter code: Protein RecA (347 aa).

An ATP-binding site is contributed by 68-75 (GPESSGKT).

Belongs to the RecA family.

The protein localises to the cytoplasm. Functionally, can catalyze the hydrolysis of ATP in the presence of single-stranded DNA, the ATP-dependent uptake of single-stranded DNA by duplex DNA, and the ATP-dependent hybridization of homologous single-stranded DNAs. It interacts with LexA causing its activation and leading to its autocatalytic cleavage. The protein is Protein RecA of Rhodococcus jostii (strain RHA1).